The sequence spans 130 residues: Large ribosomal subunit protein bL12 (130 aa).

Belongs to the bacterial ribosomal protein bL12 family. Homodimer. Part of the ribosomal stalk of the 50S ribosomal subunit. Forms a multimeric L10(L12)X complex, where L10 forms an elongated spine to which 2 to 4 L12 dimers bind in a sequential fashion. Binds GTP-bound translation factors.

Functionally, forms part of the ribosomal stalk which helps the ribosome interact with GTP-bound translation factors. Is thus essential for accurate translation. This Parafrankia sp. (strain EAN1pec) protein is Large ribosomal subunit protein bL12.